The following is a 199-amino-acid chain: 7-methyl-GTP pyrophosphatase (199 aa).

The Proton acceptor role is filled by aspartate 76.

The protein belongs to the Maf family. YceF subfamily. A divalent metal cation serves as cofactor.

Its subcellular location is the cytoplasm. It carries out the reaction N(7)-methyl-GTP + H2O = N(7)-methyl-GMP + diphosphate + H(+). In terms of biological role, nucleoside triphosphate pyrophosphatase that hydrolyzes 7-methyl-GTP (m(7)GTP). May have a dual role in cell division arrest and in preventing the incorporation of modified nucleotides into cellular nucleic acids. This chain is 7-methyl-GTP pyrophosphatase, found in Mesorhizobium japonicum (strain LMG 29417 / CECT 9101 / MAFF 303099) (Mesorhizobium loti (strain MAFF 303099)).